The following is a 105-amino-acid chain: Large ribosomal subunit protein uL24 (105 aa).

This sequence belongs to the universal ribosomal protein uL24 family. In terms of assembly, part of the 50S ribosomal subunit.

In terms of biological role, one of two assembly initiator proteins, it binds directly to the 5'-end of the 23S rRNA, where it nucleates assembly of the 50S subunit. Its function is as follows. One of the proteins that surrounds the polypeptide exit tunnel on the outside of the subunit. The protein is Large ribosomal subunit protein uL24 of Clostridium kluyveri (strain ATCC 8527 / DSM 555 / NBRC 12016 / NCIMB 10680 / K1).